We begin with the raw amino-acid sequence, 667 residues long: Leucine zipper putative tumor suppressor 2 (667 aa).

The span at 1–25 shows a compositional bias: low complexity; that stretch reads MAIVQTLPVPLEPAPEAATAQQAPA. Disordered stretches follow at residues 1–132, 150–325, and 516–541; these read MAIV…PVSG, PVLP…DEAL, and QEAE…PPVP. Positions 1-333 are required for centrosomal localization; that stretch reads MAIVQTLPVP…ALLHCVLEGK (333 aa). A compositionally biased stretch (polar residues) spans 172 to 181; the sequence is PSGSQGSLTQ. Positions 187-198 are enriched in low complexity; the sequence is ASSSSSSSSSAA. Positions 212–232 are enriched in polar residues; that stretch reads PSGTLSDSGRNSLSSLPTYST. A compositionally biased stretch (low complexity) spans 241-282; sequence SPGGHLPSHGPGRGALPGPARGAPTGPSHSDSGRSSSSKSTG. Serine 248 is modified (phosphoserine). Residues 283–294 are compositionally biased toward gly residues; it reads SLGGRLAGGLLG. Position 295 is a phosphoserine (serine 295). Residues 310–321 show a composition bias toward pro residues; the sequence is SPPPPPPPPPPS. A coiled-coil region spans residues 329–647; it reads VLEGKLRDRE…LELEARELAD (319 aa). The segment at 445–667 is sufficient for interaction with CTNNB1; the sequence is SGEISLLKQQ…CLEEITATEI (223 aa). The tract at residues 448–667 is sufficient for interaction with KATNB1 and for inhibition of katanin-mediated microtubule severing; the sequence is ISLLKQQLKE…CLEEITATEI (220 aa). The span at 516-526 shows a compositional bias: basic and acidic residues; sequence QEAERLREKAG. A Phosphoserine modification is found at serine 568. The short motif at 629-638 is the Nuclear export signal element; sequence LEQELQQLSL.

The protein belongs to the LZTS2 family. As to quaternary structure, interacts with KATNB1. Also interacts with CTNNB1, gamma-tubulin and KIF23.

The protein resides in the cytoplasm. The protein localises to the cytoskeleton. It localises to the microtubule organizing center. Its subcellular location is the centrosome. In terms of biological role, negative regulator of katanin-mediated microtubule severing and release from the centrosome. Required for central spindle formation and the completion of cytokinesis. May negatively regulate axonal outgrowth by preventing the formation of microtubule bundles that are necessary for transport within the elongating axon. Negative regulator of the Wnt signaling pathway. Represses beta-catenin-mediated transcriptional activation by promoting the nuclear exclusion of beta-catenin. This Bos taurus (Bovine) protein is Leucine zipper putative tumor suppressor 2.